The chain runs to 368 residues: QMGLAENQLTSDLVEDWILNNPEASICTPEGINDFRAIANFQDYHGLAEFRNAVAKFMARTRGNRITFDPDRIVMSGGATGAHEVTAFCLADPGEAFLVPIPYYPGFDRDLRWRTGVKLVPVMCDSSNNFVLTKEALEDAYEKAREDNIRVKGLLITNPSNPLGTIMDRKTLRTVVSFINEKRIHLVCDEIYAATVFSQPGFISIAEILEDETDIECDRNLVHIVYSLSKDMGFPGFRVGIIYSYNDAVVNCARKMSSFGLVSTQTQYLLASMLNDDEFVERFLAESAKRLAQRFRVFTGGLAKVGIKCLQSNAGLFVWMDLRQLLKKPTFDSETELWKVIIHEVKINVSPGYSFHCTEPGWFRVCFA.

Lys230 is modified (N6-(pyridoxal phosphate)lysine).

The protein belongs to the class-I pyridoxal-phosphate-dependent aminotransferase family. As to quaternary structure, homodimer. Pyridoxal 5'-phosphate is required as a cofactor.

It catalyses the reaction S-adenosyl-L-methionine = 1-aminocyclopropane-1-carboxylate + S-methyl-5'-thioadenosine + H(+). It participates in alkene biosynthesis; ethylene biosynthesis via S-adenosyl-L-methionine; ethylene from S-adenosyl-L-methionine: step 1/2. Catalyzes the formation of 1-aminocyclopropane-1-carboxylate, a direct precursor of ethylene in higher plants. The chain is 1-aminocyclopropane-1-carboxylate synthase (ACS5) from Vigna radiata var. radiata (Mung bean).